The primary structure comprises 358 residues: Methylthioribose-1-phosphate isomerase (358 aa).

Residues 54–56 (RGA), R96, and Q205 contribute to the substrate site. D246 serves as the catalytic Proton donor. 256-257 (SK) contributes to the substrate binding site.

The protein belongs to the eIF-2B alpha/beta/delta subunits family. MtnA subfamily.

The catalysed reaction is 5-(methylsulfanyl)-alpha-D-ribose 1-phosphate = 5-(methylsulfanyl)-D-ribulose 1-phosphate. Its pathway is amino-acid biosynthesis; L-methionine biosynthesis via salvage pathway; L-methionine from S-methyl-5-thio-alpha-D-ribose 1-phosphate: step 1/6. Its function is as follows. Catalyzes the interconversion of methylthioribose-1-phosphate (MTR-1-P) into methylthioribulose-1-phosphate (MTRu-1-P). This chain is Methylthioribose-1-phosphate isomerase, found in Pseudomonas putida (strain GB-1).